The sequence spans 360 residues: Variable large protein 18 (360 aa).

Residues 1-26 form the signal peptide; that stretch reads MRKRISAIINKLNISIMMMIVVLMIG. Cysteine 27 carries N-palmitoyl cysteine lipidation. Cysteine 27 is lipidated: S-diacylglycerol cysteine.

This sequence belongs to the variable large protein (Vlp) family. Alpha subfamily.

The protein resides in the cell outer membrane. Functionally, the Vlp and Vsp proteins are antigenically distinct proteins, only one vlp or vsp gene is transcriptionally active at any one time. Switching between these genes is a mechanism of host immune response evasion. This chain is Variable large protein 18, found in Borrelia hermsii.